Here is a 405-residue protein sequence, read N- to C-terminus: Methylamine dehydrogenase heavy chain (405 aa).

The signal sequence occupies residues 1–36 (MTTFDHPSMIRQPKPTGLAGGLVLAALMLSSSLALA).

This sequence belongs to the aromatic amine dehydrogenase heavy chain family. Tetramer of two light and two heavy chains.

It localises to the periplasm. It carries out the reaction 2 oxidized [amicyanin] + methylamine + H2O = 2 reduced [amicyanin] + formaldehyde + NH4(+) + 2 H(+). Its function is as follows. Methylamine dehydrogenase carries out the oxidation of methylamine. Electrons are passed from methylamine dehydrogenase to amicyanin. This Methylophilus methylotrophus (Bacterium W3A1) protein is Methylamine dehydrogenase heavy chain (mauB).